A 317-amino-acid chain; its full sequence is Melanocyte-stimulating hormone receptor (317 aa).

The Extracellular segment spans residues methionine 1–glutamate 37. N-linked (GlcNAc...) asparagine glycosylation is present at asparagine 29. Residues valine 38–isoleucine 63 traverse the membrane as a helical segment. At alanine 64 to serine 72 the chain is on the cytoplasmic side. The chain crosses the membrane as a helical span at residues methionine 73–leucine 93. Residues glutamate 94–asparagine 118 lie on the Extracellular side of the membrane. The helical transmembrane segment at threonine 119–valine 140 threads the bilayer. The Cytoplasmic portion of the chain corresponds to aspartate 141–arginine 163. A helical transmembrane segment spans residues valine 164–tyrosine 183. At aspartate 184 to cysteine 191 the chain is on the extracellular side. The chain crosses the membrane as a helical span at residues leucine 192–leucine 211. At alanine 212 to alanine 240 the chain is on the cytoplasmic side. The helical transmembrane segment at alanine 241–phenylalanine 266 threads the bilayer. Over cysteine 267–asparagine 279 the chain is Extracellular. The helical transmembrane segment at phenylalanine 280–phenylalanine 300 threads the bilayer. Topologically, residues arginine 301 to tryptophan 317 are cytoplasmic. A lipid anchor (S-palmitoyl cysteine) is attached at cysteine 315.

This sequence belongs to the G-protein coupled receptor 1 family. As to quaternary structure, interacts with MGRN1, but does not undergo MGRN1-mediated ubiquitination; this interaction competes with GNAS-binding and thus inhibits agonist-induced cAMP production. Interacts with OPN3; the interaction results in a decrease in MC1R-mediated cAMP signaling and ultimately a decrease in melanin production in melanocytes.

Its subcellular location is the cell membrane. Receptor for MSH (alpha, beta and gamma) and ACTH. The activity of this receptor is mediated by G proteins which activate adenylate cyclase. Mediates melanogenesis, the production of eumelanin (black/brown) and phaeomelanin (red/yellow), via regulation of cAMP signaling in melanocytes. The sequence is that of Melanocyte-stimulating hormone receptor (MC1R) from Saguinus imperator (Emperor tamarin).